The sequence spans 470 residues: 6-phospho-beta-galactosidase (470 aa).

Positions 19, 116, 159, 160, and 297 each coordinate D-galactose 6-phosphate. E160 functions as the Proton donor in the catalytic mechanism. The Nucleophile role is filled by E375. Positions 430, 431, 437, and 439 each coordinate D-galactose 6-phosphate.

Belongs to the glycosyl hydrolase 1 family.

The catalysed reaction is a 6-phospho-beta-D-galactoside + H2O = D-galactose 6-phosphate + an alcohol. It participates in carbohydrate metabolism; lactose degradation; D-galactose 6-phosphate and beta-D-glucose from lactose 6-phosphate: step 1/1. In Staphylococcus aureus (strain COL), this protein is 6-phospho-beta-galactosidase.